A 565-amino-acid chain; its full sequence is Ubiquitin carboxyl-terminal hydrolase 39 (565 aa).

Composition is skewed to basic and acidic residues over residues 1-21 and 28-39; these read MSGR…ESES and VKRERDREREPE. Disordered stretches follow at residues 1 to 61 and 75 to 95; these read MSGR…SARE and EREV…NGRV. At Ser46 the chain carries Phosphoserine. Residue Lys51 forms a Glycyl lysine isopeptide (Lys-Gly) (interchain with G-Cter in SUMO2) linkage. The residue at position 82 (Ser82) is a Phosphoserine. Over residues 85–95 the composition is skewed to basic and acidic residues; the sequence is EREVRAKNGRV. A UBP-type; degenerate zinc finger spans residues 103 to 200; sequence RHCPYLDTIN…YVLKPTFTKQ (98 aa). Cys136, Cys139, His155, and His161 together coordinate Zn(2+). Positions 225 to 555 constitute a USP domain; sequence VGLNNIKAND…EAYIQIWKRR (331 aa).

This sequence belongs to the peptidase C19 family. The U4/U6-U5 tri-snRNP complex is a building block of the precatalytic spliceosome (spliceosome B complex). Component of the U4/U6-U5 tri-snRNP complex composed of the U4, U6 and U5 snRNAs and at least PRPF3, PRPF4, PRPF6, PRPF8, PRPF31, SNRNP200, TXNL4A, SNRNP40, SNRPB, SNRPD1, SNRPD2, SNRPD3, SNRPE, SNRPF, SNRPG, DDX23, CD2BP2, PPIH, SNU13, EFTUD2, SART1 and USP39, plus LSM2, LSM3, LSM4, LSM5, LSM6, LSM7 and LSM8.

It is found in the nucleus. It catalyses the reaction Thiol-dependent hydrolysis of ester, thioester, amide, peptide and isopeptide bonds formed by the C-terminal Gly of ubiquitin (a 76-residue protein attached to proteins as an intracellular targeting signal).. Deubiquitinating enzyme that plays a role in many cellular processes including cellular antiviral response, epithelial morphogenesis, DNA repair or B-cell development. Plays a role in pre-mRNA splicing as a component of the U4/U6-U5 tri-snRNP, one of the building blocks of the precatalytic spliceosome. Specifically regulates immunoglobulin gene rearrangement in a spliceosome-dependent manner, which involves modulating chromatin interactions at the Igh locus and therefore plays an essential role in B-cell development. Regulates AURKB mRNA levels, and thereby plays a role in cytokinesis and in the spindle checkpoint. Regulates apoptosis and G2/M cell cycle checkpoint in response to DNA damage by deubiquitinating and stabilizing CHK2. Also plays an important role in DNA repair by controlling the recruitment of XRCC4/LIG4 to DNA double-strand breaks for non-homologous end-joining repair. Participates in antiviral activity by affecting the type I IFN signaling by stabilizing STAT1 and decreasing its 'Lys-6'-linked ubiquitination. Contributes to non-canonical Wnt signaling during epidermal differentiation. Acts as a negative regulator NF-kappa-B activation through deubiquitination of 'Lys-48'-linked ubiquitination of NFKBIA. The chain is Ubiquitin carboxyl-terminal hydrolase 39 from Homo sapiens (Human).